The following is an 894-amino-acid chain: B-cell lymphoma/leukemia 11B (894 aa).

A phosphoserine mark is found at Ser97 and Ser110. Thr120 carries the post-translational modification Phosphothreonine. Ser129 carries the post-translational modification Phosphoserine. Lys137 participates in a covalent cross-link: Glycyl lysine isopeptide (Lys-Gly) (interchain with G-Cter in SUMO2). The segment at 221 to 251 (YICTTCKQPFNSAWFLLQHAQNTHGFRIYLE) adopts a C2H2-type 1 zinc-finger fold. At Ser256 the chain carries Phosphoserine. At Thr260 the chain carries Phosphothreonine. Position 277 is a phosphoserine (Ser277). Omega-N-methylarginine is present on Arg293. Residue Arg322 is modified to Asymmetric dimethylarginine. Ser358 is modified (phosphoserine). 2 disordered regions span residues 370 to 428 (LAGN…KSKS) and 471 to 583 (KRHM…GGGA). Residue Thr376 is modified to Phosphothreonine. A phosphoserine mark is found at Ser381, Ser398, and Ser401. Over residues 396–423 (QPSPKSPFLSTPPLPPMPPGGTPPPQPP) the composition is skewed to pro residues. Residues Thr406 and Thr417 each carry the phosphothreonine modification. 2 C2H2-type zinc fingers span residues 427–454 (KSCEFCGKTFKFQSNLIVHRRSHTGEKP) and 455–482 (YKCQLCDHACSQASKLKRHMKTHMHKAG). Over residues 471-480 (KRHMKTHMHK) the composition is skewed to basic residues. Residues Ser483, Ser488, Ser496, and Ser497 each carry the phosphoserine modification. Basic and acidic residues predominate over residues 511 to 529 (KAADGDFRHHESDPSLGHE). The span at 530–546 (PEEEDEEEEEEEEELLL) shows a compositional bias: acidic residues. A compositionally biased stretch (gly residues) spans 568 to 583 (NGGGGVPGVPGAGGGA). Residues Lys591 and Lys617 each participate in a glycyl lysine isopeptide (Lys-Gly) (interchain with G-Cter in SUMO2) cross-link. The segment at 653 to 680 (GRGGGFAPGTEPFPGLFPRKPAPLPSPG) is disordered. Ser678 carries the phosphoserine modification. Residues Lys686 and Lys723 each participate in a glycyl lysine isopeptide (Lys-Gly) (interchain with G-Cter in SUMO2) cross-link. A compositionally biased stretch (polar residues) spans 737 to 752 (FATSSEHSSENGSLRF). The interval 737-794 (FATSSEHSSENGSLRFSTPPGDLLDGGLSGRSGTASGGSTPHLGGPGPGRPSSKEGRR) is disordered. A compositionally biased stretch (low complexity) spans 753-775 (STPPGDLLDGGLSGRSGTASGGS). A Phosphothreonine modification is found at Thr754. Residues Ser765 and Ser772 each carry the phosphoserine modification. 3 consecutive C2H2-type zinc fingers follow at residues 796–823 (DTCEYCGKVFKNCSNLTVHRRSHTGERP), 824–853 (YKCELCNYACAQSSKLTRHMKTHGQIGKEV), and 854–884 (YRCDICQMPFSVYSTLEKHMKKWHGEHLLTN). Residue Lys851 is modified to N6-acetyllysine. Lys887 participates in a covalent cross-link: Glycyl lysine isopeptide (Lys-Gly) (interchain with G-Cter in SUMO2).

In terms of assembly, interacts with TFCOUP1, SIRT1, ARP1 and EAR2. Interacts with EP300; the interaction is detected in activated T-lymphocytes, but not under resting conditions. In terms of processing, sumoylated with SUMO1. As to expression, highly expressed in brain and in malignant T-cell lines derived from patients with adult T-cell leukemia/lymphoma.

Its subcellular location is the nucleus. Key regulator of both differentiation and survival of T-lymphocytes during thymocyte development in mammals. Essential in controlling the responsiveness of hematopoietic stem cells to chemotactic signals by modulating the expression of the receptors CCR7 and CCR9, which direct the movement of progenitor cells from the bone marrow to the thymus. Is a regulator of IL2 promoter and enhances IL2 expression in activated CD4(+) T-lymphocytes. Tumor-suppressor that represses transcription through direct, TFCOUP2-independent binding to a GC-rich response element. May also function in the P53-signaling pathway. The polypeptide is B-cell lymphoma/leukemia 11B (BCL11B) (Homo sapiens (Human)).